Here is a 350-residue protein sequence, read N- to C-terminus: GTPase Obg (350 aa).

The Obg domain maps to 1–158 (MFIDSVKITL…RLVRLELKLI (158 aa)). An OBG-type G domain is found at 159-339 (ADVGLVGFPN…LKFMLLEEIK (181 aa)). GTP contacts are provided by residues 165–172 (GFPNVGKS), 190–194 (FTTLT), 212–215 (DIPG), 280–283 (SKSD), and 320–322 (SSL). 2 residues coordinate Mg(2+): S172 and T192.

Belongs to the TRAFAC class OBG-HflX-like GTPase superfamily. OBG GTPase family. Monomer. The cofactor is Mg(2+).

The protein localises to the cytoplasm. Functionally, an essential GTPase which binds GTP, GDP and possibly (p)ppGpp with moderate affinity, with high nucleotide exchange rates and a fairly low GTP hydrolysis rate. Plays a role in control of the cell cycle, stress response, ribosome biogenesis and in those bacteria that undergo differentiation, in morphogenesis control. This chain is GTPase Obg, found in Campylobacter jejuni (strain RM1221).